The primary structure comprises 165 residues: Small ribosomal subunit protein uS5 (165 aa).

Residues 13–76 (LEEKVLVVNR…EAARKNLITI (64 aa)) form the S5 DRBM domain.

Belongs to the universal ribosomal protein uS5 family. As to quaternary structure, part of the 30S ribosomal subunit. Contacts proteins S4 and S8.

Functionally, with S4 and S12 plays an important role in translational accuracy. Its function is as follows. Located at the back of the 30S subunit body where it stabilizes the conformation of the head with respect to the body. The sequence is that of Small ribosomal subunit protein uS5 from Chlamydia felis (strain Fe/C-56) (Chlamydophila felis).